The chain runs to 469 residues: D-3-phosphoglycerate dehydrogenase 2 (469 aa).

The residue at position 2 (Ser-2) is an N-acetylserine. Phosphoserine is present on residues Ser-22, Ser-29, and Ser-33. Residues 208–209 (HI), Asp-228, 285–287 (ASR), and Asp-311 each bind NAD(+). Residue Arg-287 is part of the active site. Glu-316 is an active-site residue. The active-site Proton donor is His-347. NAD(+) is bound at residue 347-350 (HIGG). The 71-residue stretch at 399–469 (RVLYIHRNVP…SAKVSIRLLY (71 aa)) folds into the ACT domain.

This sequence belongs to the D-isomer specific 2-hydroxyacid dehydrogenase family.

It catalyses the reaction (2R)-3-phosphoglycerate + NAD(+) = 3-phosphooxypyruvate + NADH + H(+). The catalysed reaction is (R)-2-hydroxyglutarate + NAD(+) = 2-oxoglutarate + NADH + H(+). It participates in amino-acid biosynthesis; L-serine biosynthesis; L-serine from 3-phospho-D-glycerate: step 1/3. Functionally, catalyzes the reversible oxidation of 3-phospho-D-glycerate to 3-phosphonooxypyruvate, the first step of the phosphorylated L-serine biosynthesis pathway. Also catalyzes the reversible oxidation of 2-hydroxyglutarate to 2-oxoglutarate. The chain is D-3-phosphoglycerate dehydrogenase 2 (SER33) from Saccharomyces cerevisiae (strain ATCC 204508 / S288c) (Baker's yeast).